The sequence spans 37 residues: Large ribosomal subunit protein bL36 (37 aa).

Belongs to the bacterial ribosomal protein bL36 family.

This is Large ribosomal subunit protein bL36 from Caldicellulosiruptor saccharolyticus (strain ATCC 43494 / DSM 8903 / Tp8T 6331).